The sequence spans 462 residues: UDP-N-acetylmuramate--L-alanine ligase (462 aa).

An ATP-binding site is contributed by 119-125; sequence GTHGKTT.

The protein belongs to the MurCDEF family.

It is found in the cytoplasm. It carries out the reaction UDP-N-acetyl-alpha-D-muramate + L-alanine + ATP = UDP-N-acetyl-alpha-D-muramoyl-L-alanine + ADP + phosphate + H(+). Its pathway is cell wall biogenesis; peptidoglycan biosynthesis. Cell wall formation. The protein is UDP-N-acetylmuramate--L-alanine ligase of Parabacteroides distasonis (strain ATCC 8503 / DSM 20701 / CIP 104284 / JCM 5825 / NCTC 11152).